The primary structure comprises 726 residues: AP-1 complex subunit beta-1 (726 aa).

The protein belongs to the adaptor complexes large subunit family. Adaptor protein complex 1 (AP-1) is a heterotetramer composed of two large adaptins (gamma-type subunit APL4 and beta-type subunit APL2), a medium adaptin (mu-type subunit APM1) and a small adaptin (sigma-type subunit APS1). Interacts with CHC1. Interacts with APM2, probably forming an alternative AP-1-like complex.

It is found in the cell membrane. The protein localises to the membrane. It localises to the coated pit. Its function is as follows. Adaptins are components of the adaptor complexes which link clathrin to receptors in coated vesicles. Clathrin-associated protein complexes are believed to interact with the cytoplasmic tails of membrane proteins, leading to their selection and concentration. The AP-1 complex interacts directly with clathrin. The polypeptide is AP-1 complex subunit beta-1 (APL2) (Saccharomyces cerevisiae (strain ATCC 204508 / S288c) (Baker's yeast)).